The sequence spans 112 residues: UPF0102 protein CFF8240_0294 (112 aa).

The protein belongs to the UPF0102 family.

This Campylobacter fetus subsp. fetus (strain 82-40) protein is UPF0102 protein CFF8240_0294.